A 37-amino-acid polypeptide reads, in one-letter code: Large ribosomal subunit protein bL36c (37 aa).

This sequence belongs to the bacterial ribosomal protein bL36 family.

The protein localises to the plastid. It is found in the chloroplast. The protein is Large ribosomal subunit protein bL36c of Psilotum nudum (Whisk fern).